Consider the following 272-residue polypeptide: 2-dehydro-3-deoxyphosphooctonate aldolase (272 aa).

It belongs to the KdsA family.

It localises to the cytoplasm. The catalysed reaction is D-arabinose 5-phosphate + phosphoenolpyruvate + H2O = 3-deoxy-alpha-D-manno-2-octulosonate-8-phosphate + phosphate. It functions in the pathway carbohydrate biosynthesis; 3-deoxy-D-manno-octulosonate biosynthesis; 3-deoxy-D-manno-octulosonate from D-ribulose 5-phosphate: step 2/3. The protein operates within bacterial outer membrane biogenesis; lipopolysaccharide biosynthesis. The protein is 2-dehydro-3-deoxyphosphooctonate aldolase of Geobacter sulfurreducens (strain ATCC 51573 / DSM 12127 / PCA).